The sequence spans 277 residues: F420-dependent methylenetetrahydromethanopterin dehydrogenase (277 aa).

It belongs to the MTD family.

The catalysed reaction is 5,10-methylenetetrahydromethanopterin + oxidized coenzyme F420-(gamma-L-Glu)(n) + 2 H(+) = 5,10-methenyl-5,6,7,8-tetrahydromethanopterin + reduced coenzyme F420-(gamma-L-Glu)(n). Its pathway is one-carbon metabolism; methanogenesis from CO(2); 5,10-methylene-5,6,7,8-tetrahydromethanopterin from 5,10-methenyl-5,6,7,8-tetrahydromethanopterin (coenzyme F420 route): step 1/1. In terms of biological role, catalyzes the reversible reduction of methenyl-H(4)MPT(+) to methylene-H(4)MPT. The sequence is that of F420-dependent methylenetetrahydromethanopterin dehydrogenase from Methanococcus maripaludis (strain C7 / ATCC BAA-1331).